The sequence spans 597 residues: Probable methyltransferase-like protein 25 (597 aa).

Residues 245-254 are compositionally biased toward basic and acidic residues; the sequence is ECKGDAESVQ. Disordered stretches follow at residues 245–265 and 317–342; these read ECKG…DLSA and TSSQ…KARD. Over residues 317–326 the composition is skewed to polar residues; it reads TSSQVQNTEK.

In terms of biological role, probable methyltransferase. The chain is Probable methyltransferase-like protein 25 (Mettl25) from Mus musculus (Mouse).